A 626-amino-acid polypeptide reads, in one-letter code: MADQRMDISSTISDFMSPGPTDLLSSSLGTSGVDCNRKRKGSATDYQESMDTDKDDPHGRLEYAEHQGRIKNAREAHSQIEKRRRDKMNSFIDELASLVPTCNAMSRKLDKLTVLRMAVQHMKTLRGATNPYTEANYKPTFLSDDELKHLILRAADGFLFVVGCDRGKILFVSESVFKILNYSQNDLIGQSLFDYLHPKDIAKVKEQLSSSDTAPRERLIDAKTGLPVKTDITPGPSRLCSGARRSFFCRMKCNRPSVKVEDKDFASTCSKKKADRKSFCTIHSTGYLKSWPPTKMGLDEDNEPDNEGCNLSCLVAIGRLHSHVVPQPVNGEIRVKSMEYVSRHAIDGKFVFVDQRATAILAYLPQELLGTSCYEYFHQDDIGHLAECHRQVLQTREKITTNCYKFKIKDGSFITLRSRWFSFMNPWTKEVEYIVSTNTVVLANVLEGGDPTFPQLTASPHSMDSMLPSGEGGPKRTHPTVPGIPGGTRAGAGKIGRMIAEEIMEIHRIRGSSPSSCGSSPLNITSTPPPDASSPGGKKILNGGTPDIPSTGLLPGQAQETPGYPYSDSSSILGENPHIGIDMIDNDQGSSSPSNDEAAMAVIMSLLEADAGLGGPVDFSDLPWPL.

A disordered region spans residues 1 to 58; it reads MADQRMDISSTISDFMSPGPTDLLSSSLGTSGVDCNRKRKGSATDYQESMDTDKDDPH. The residue at position 17 (S17) is a Phosphoserine; by GSK3-beta. Residues 17-32 are compositionally biased toward low complexity; sequence SPGPTDLLSSSLGTSG. Position 21 is a phosphothreonine; by GSK3-beta (T21). The short motif at 36–41 is the Nuclear localization signal element; that stretch reads NRKRKG. In terms of domain architecture, bHLH spans 72–125; it reads NAREAHSQIEKRRRDKMNSFIDELASLVPTCNAMSRKLDKLTVLRMAVQHMKTL. The residue at position 78 (S78) is a Phosphoserine. Residue S90 is modified to Phosphoserine; by CK2. Positions 142–152 match the Nuclear export signal 1 motif; sequence LSDDELKHLIL. The 73-residue stretch at 143-215 folds into the PAS 1 domain; that stretch reads SDDELKHLIL…EQLSSSDTAP (73 aa). Residue K252 forms a Glycyl lysine isopeptide (Lys-Gly) (interchain with G-Cter in SUMO2 and SUMO3) linkage. K259 is covalently cross-linked (Glycyl lysine isopeptide (Lys-Gly) (interchain with G-Cter in SUMO); alternate). Residue K259 forms a Glycyl lysine isopeptide (Lys-Gly) (interchain with G-Cter in SUMO2); alternate linkage. The region spanning 326–396 is the PAS 2 domain; the sequence is PQPVNGEIRV…ECHRQVLQTR (71 aa). Positions 361–369 match the Nuclear export signal 2 motif; it reads LAYLPQELL. A PAC domain is found at 401-444; the sequence is TNCYKFKIKDGSFITLRSRWFSFMNPWTKEVEYIVSTNTVVLAN. Disordered stretches follow at residues 459 to 492 and 511 to 595; these read SPHS…RAGA and GSSP…SPSN. The interaction with CIART stretch occupies residues 508–588; the sequence is RIRGSSPSSC…IGIDMIDNDQ (81 aa). Residues 511 to 521 show a composition bias toward low complexity; that stretch reads GSSPSSCGSSP. N6-acetyllysine is present on K538.

Component of the circadian clock oscillator which includes the CRY1/2 proteins, CLOCK or NPAS2, BMAL1 or BMAL2, CSNK1D and/or CSNK1E, TIMELESS and the PER1/2/3 proteins. Forms a heterodimer with CLOCK. The CLOCK-BMAL1 heterodimer is required for E-box-dependent transactivation, for CLOCK nuclear translocation and degradation, and, for phosphorylation of both CLOCK and BMAL1. Part of a nuclear complex which also includes RACK1 and PRKCA; RACK1 and PRKCA are recruited to the complex in a circadian manner. Interacts with NPAS2. Interacts with EZH2. Interacts with SUMO3. Interacts with SIRT1. Interacts with AHR. Interacts with ID1, ID2 and ID3. Interacts with DDX4. Interacts with OGT. Interacts with EED and SUZ12. Interacts with MTA1. Interacts with CIART. Interacts with HSP90. Interacts with KAT2B and EP300. Interacts with BHLHE40/DEC1 and BHLHE41/DEC2. Interacts with RELB and the interaction is enhanced in the presence of CLOCK. Interacts with PER1, PER2, CRY1 and CRY2 and this interaction requires a translocation to the nucleus. Interaction of the CLOCK-BMAL1 heterodimer with PER or CRY inhibits transcription activation. Interaction of the CLOCK-BMAL1 with CRY1 is independent of DNA but with PER2 is off DNA. The CLOCK-BMAL1 heterodimer interacts with GSK3B. Interacts with KDM5A. Interacts with KMT2A; in a circadian manner. Interacts with UBE3A. Interacts with PRKCG. Interacts with MAGEL2. Interacts with NCOA2. Interacts with THRAP3. The CLOCK-BMAL1 heterodimer interacts with PASD1. Interacts with PASD1. Interacts with USP9X. Interacts with PIWIL2 (via PIWI domain). Interacts with HDAC3. Interacts with HNF4A. Post-translationally, ubiquitinated, leading to its proteasomal degradation. Deubiquitinated by USP9X. In terms of processing, O-glycosylated; contains O-GlcNAc. O-glycosylation by OGT prevents protein degradation by inhibiting ubiquitination. It also stabilizes the CLOCK-BMAL1 heterodimer thereby increasing CLOCK-BMAL1-mediated transcription of genes in the negative loop of the circadian clock such as PER1/2/3 and CRY1/2. Acetylated on Lys-538 by CLOCK during the repression phase of the circadian cycle. Acetylation facilitates recruitment of CRY1 protein and initiates the repression phase of the circadian cycle. Acetylated at Lys-538 by KAT5 during the activation phase of the cycle, leading to recruitment of the positive transcription elongation factor b (P-TEFb) and BRD4, followed by productive elongation of circadian transcripts. Deacetylated by SIRT1, which may result in decreased protein stability. Post-translationally, phosphorylated upon dimerization with CLOCK. Phosphorylation enhances the transcriptional activity, alters the subcellular localization and decreases the stability of the CLOCK-BMAL1 heterodimer by promoting its degradation. Phosphorylation shows circadian variations in the liver with a peak between CT10 to CT14. Phosphorylation at Ser-90 by CK2 is essential for its nuclear localization, its interaction with CLOCK and controls CLOCK nuclear entry. Dephosphorylation at Ser-78 is important for dimerization with CLOCK and transcriptional activity. In terms of processing, sumoylated on Lys-259 upon dimerization with CLOCK. Predominantly conjugated to poly-SUMO2/3 rather than SUMO1 and the level of these conjugates undergo rhythmic variation, peaking at CT9-CT12. Sumoylation localizes it exclusively to the PML body and promotes its ubiquitination in the PML body, ubiquitin-dependent proteasomal degradation and the transcriptional activity of the CLOCK-BMAL1 heterodimer. Undergoes lysosome-mediated degradation in a time-dependent manner in the liver.

The protein localises to the nucleus. It localises to the cytoplasm. The protein resides in the PML body. In terms of biological role, transcriptional activator which forms a core component of the circadian clock. The circadian clock, an internal time-keeping system, regulates various physiological processes through the generation of approximately 24 hour circadian rhythms in gene expression, which are translated into rhythms in metabolism and behavior. It is derived from the Latin roots 'circa' (about) and 'diem' (day) and acts as an important regulator of a wide array of physiological functions including metabolism, sleep, body temperature, blood pressure, endocrine, immune, cardiovascular, and renal function. Consists of two major components: the central clock, residing in the suprachiasmatic nucleus (SCN) of the brain, and the peripheral clocks that are present in nearly every tissue and organ system. Both the central and peripheral clocks can be reset by environmental cues, also known as Zeitgebers (German for 'timegivers'). The predominant Zeitgeber for the central clock is light, which is sensed by retina and signals directly to the SCN. The central clock entrains the peripheral clocks through neuronal and hormonal signals, body temperature and feeding-related cues, aligning all clocks with the external light/dark cycle. Circadian rhythms allow an organism to achieve temporal homeostasis with its environment at the molecular level by regulating gene expression to create a peak of protein expression once every 24 hours to control when a particular physiological process is most active with respect to the solar day. Transcription and translation of core clock components (CLOCK, NPAS2, BMAL1, BMAL2, PER1, PER2, PER3, CRY1 and CRY2) plays a critical role in rhythm generation, whereas delays imposed by post-translational modifications (PTMs) are important for determining the period (tau) of the rhythms (tau refers to the period of a rhythm and is the length, in time, of one complete cycle). A diurnal rhythm is synchronized with the day/night cycle, while the ultradian and infradian rhythms have a period shorter and longer than 24 hours, respectively. Disruptions in the circadian rhythms contribute to the pathology of cardiovascular diseases, cancer, metabolic syndromes and aging. A transcription/translation feedback loop (TTFL) forms the core of the molecular circadian clock mechanism. Transcription factors, CLOCK or NPAS2 and BMAL1 or BMAL2, form the positive limb of the feedback loop, act in the form of a heterodimer and activate the transcription of core clock genes and clock-controlled genes (involved in key metabolic processes), harboring E-box elements (5'-CACGTG-3') within their promoters. The core clock genes: PER1/2/3 and CRY1/2 which are transcriptional repressors form the negative limb of the feedback loop and interact with the CLOCK|NPAS2-BMAL1|BMAL2 heterodimer inhibiting its activity and thereby negatively regulating their own expression. This heterodimer also activates nuclear receptors NR1D1/2 and RORA/B/G, which form a second feedback loop and which activate and repress BMAL1 transcription, respectively. BMAL1 positively regulates myogenesis and negatively regulates adipogenesis via the transcriptional control of the genes of the canonical Wnt signaling pathway. Plays a role in normal pancreatic beta-cell function; regulates glucose-stimulated insulin secretion via the regulation of antioxidant genes NFE2L2/NRF2 and its targets SESN2, PRDX3, CCLC and CCLM. Negatively regulates the mTORC1 signaling pathway; regulates the expression of MTOR and DEPTOR. Controls diurnal oscillations of Ly6C inflammatory monocytes; rhythmic recruitment of the PRC2 complex imparts diurnal variation to chemokine expression that is necessary to sustain Ly6C monocyte rhythms. Regulates the expression of HSD3B2, STAR, PTGS2, CYP11A1, CYP19A1 and LHCGR in the ovary and also the genes involved in hair growth. Plays an important role in adult hippocampal neurogenesis by regulating the timely entry of neural stem/progenitor cells (NSPCs) into the cell cycle and the number of cell divisions that take place prior to cell-cycle exit. Regulates the circadian expression of CIART and KLF11. The CLOCK-BMAL1 heterodimer regulates the circadian expression of SERPINE1/PAI1, VWF, B3, CCRN4L/NOC, NAMPT, DBP, MYOD1, PPARGC1A, PPARGC1B, SIRT1, GYS2, F7, NGFR, GNRHR, BHLHE40/DEC1, ATF4, MTA1, KLF10 and also genes implicated in glucose and lipid metabolism. Promotes rhythmic chromatin opening, regulating the DNA accessibility of other transcription factors. The NPAS2-BMAL1 heterodimer positively regulates the expression of MAOA, F7 and LDHA and modulates the circadian rhythm of daytime contrast sensitivity by regulating the rhythmic expression of adenylate cyclase type 1 (ADCY1) in the retina. The preferred binding motif for the CLOCK-BMAL1 heterodimer is 5'-CACGTGA-3', which contains a flanking adenine nucleotide at the 3-prime end of the canonical 6-nucleotide E-box sequence. CLOCK specifically binds to the half-site 5'-CAC-3', while BMAL1 binds to the half-site 5'-GTGA-3'. The CLOCK-BMAL1 heterodimer also recognizes the non-canonical E-box motifs 5'-AACGTGA-3' and 5'-CATGTGA-3'. Essential for the rhythmic interaction of CLOCK with ASS1 and plays a critical role in positively regulating CLOCK-mediated acetylation of ASS1. Plays a role in protecting against lethal sepsis by limiting the expression of immune checkpoint protein CD274 in macrophages in a PKM2-dependent manner. Regulates the diurnal rhythms of skeletal muscle metabolism via transcriptional activation of genes promoting triglyceride synthesis (DGAT2) and metabolic efficiency (COQ10B). The chain is Basic helix-loop-helix ARNT-like protein 1 (BMAL1) from Mesocricetus auratus (Golden hamster).